Here is a 274-residue protein sequence, read N- to C-terminus: Probable ribosomal RNA small subunit methyltransferase A (274 aa).

Residues H22, L24, G50, E71, D99, and N114 each contribute to the S-adenosyl-L-methionine site.

The protein belongs to the class I-like SAM-binding methyltransferase superfamily. rRNA adenine N(6)-methyltransferase family. RsmA subfamily.

It localises to the cytoplasm. Specifically dimethylates two adjacent adenosines in the loop of a conserved hairpin near the 3'-end of 16S rRNA in the 30S particle. May play a critical role in biogenesis of 30S subunits. This chain is Probable ribosomal RNA small subunit methyltransferase A, found in Natronomonas pharaonis (strain ATCC 35678 / DSM 2160 / CIP 103997 / JCM 8858 / NBRC 14720 / NCIMB 2260 / Gabara) (Halobacterium pharaonis).